We begin with the raw amino-acid sequence, 149 residues long: Large ribosomal subunit protein bL9 (149 aa).

The protein belongs to the bacterial ribosomal protein bL9 family.

In terms of biological role, binds to the 23S rRNA. The protein is Large ribosomal subunit protein bL9 of Shewanella amazonensis (strain ATCC BAA-1098 / SB2B).